Consider the following 302-residue polypeptide: Sulfate adenylyltransferase subunit 2 (302 aa).

The protein belongs to the PAPS reductase family. CysD subfamily. Heterodimer composed of CysD, the smaller subunit, and CysN.

The catalysed reaction is sulfate + ATP + H(+) = adenosine 5'-phosphosulfate + diphosphate. Its pathway is sulfur metabolism; hydrogen sulfide biosynthesis; sulfite from sulfate: step 1/3. Its function is as follows. With CysN forms the ATP sulfurylase (ATPS) that catalyzes the adenylation of sulfate producing adenosine 5'-phosphosulfate (APS) and diphosphate, the first enzymatic step in sulfur assimilation pathway. APS synthesis involves the formation of a high-energy phosphoric-sulfuric acid anhydride bond driven by GTP hydrolysis by CysN coupled to ATP hydrolysis by CysD. This is Sulfate adenylyltransferase subunit 2 from Escherichia coli O157:H7 (strain EC4115 / EHEC).